Consider the following 145-residue polypeptide: Cuticle protein 65 (145 aa).

7 repeat units span residues 27–30 (AAPA), 33–37 (AAPAV), 39–42 (AAPA), 86–89 (AAPV), 92–95 (AAPA), 98–101 (AAPA), and 123–126 (AAPA).

In terms of biological role, component of the cuticle of migratory locust which contains more than 100 different structural proteins. In Locusta migratoria (Migratory locust), this protein is Cuticle protein 65.